Reading from the N-terminus, the 421-residue chain is Serine--tRNA ligase (421 aa).

An L-serine-binding site is contributed by 230–232 (TAE). 259–261 (RRE) lines the ATP pocket. Residue Glu-282 participates in L-serine binding. 346–349 (EISS) serves as a coordination point for ATP. Residue Ser-381 participates in L-serine binding.

The protein belongs to the class-II aminoacyl-tRNA synthetase family. Type-1 seryl-tRNA synthetase subfamily. In terms of assembly, homodimer. The tRNA molecule binds across the dimer.

The protein resides in the cytoplasm. The catalysed reaction is tRNA(Ser) + L-serine + ATP = L-seryl-tRNA(Ser) + AMP + diphosphate + H(+). It carries out the reaction tRNA(Sec) + L-serine + ATP = L-seryl-tRNA(Sec) + AMP + diphosphate + H(+). The protein operates within aminoacyl-tRNA biosynthesis; selenocysteinyl-tRNA(Sec) biosynthesis; L-seryl-tRNA(Sec) from L-serine and tRNA(Sec): step 1/1. Its function is as follows. Catalyzes the attachment of serine to tRNA(Ser). Is also able to aminoacylate tRNA(Sec) with serine, to form the misacylated tRNA L-seryl-tRNA(Sec), which will be further converted into selenocysteinyl-tRNA(Sec). The sequence is that of Serine--tRNA ligase from Acidithiobacillus ferrooxidans (strain ATCC 23270 / DSM 14882 / CIP 104768 / NCIMB 8455) (Ferrobacillus ferrooxidans (strain ATCC 23270)).